The sequence spans 84 residues: Small ribosomal subunit protein bS18 (84 aa).

Belongs to the bacterial ribosomal protein bS18 family. In terms of assembly, part of the 30S ribosomal subunit. Forms a tight heterodimer with protein bS6.

Binds as a heterodimer with protein bS6 to the central domain of the 16S rRNA, where it helps stabilize the platform of the 30S subunit. The sequence is that of Small ribosomal subunit protein bS18 from Mycobacterium sp. (strain JLS).